The sequence spans 584 residues: Arginine--tRNA ligase (584 aa).

The 'HIGH' region signature appears at 130–140 (PNVAKEMHVGH).

Belongs to the class-I aminoacyl-tRNA synthetase family. Monomer.

It localises to the cytoplasm. It catalyses the reaction tRNA(Arg) + L-arginine + ATP = L-arginyl-tRNA(Arg) + AMP + diphosphate. This chain is Arginine--tRNA ligase, found in Protochlamydia amoebophila (strain UWE25).